The primary structure comprises 151 residues: Deoxyuridine 5'-triphosphate nucleotidohydrolase (151 aa).

Residues 70–72, N83, 87–89, and M97 contribute to the substrate site; these read RSG and LID.

It belongs to the dUTPase family. The cofactor is Mg(2+).

The enzyme catalyses dUTP + H2O = dUMP + diphosphate + H(+). It functions in the pathway pyrimidine metabolism; dUMP biosynthesis; dUMP from dCTP (dUTP route): step 2/2. Its function is as follows. This enzyme is involved in nucleotide metabolism: it produces dUMP, the immediate precursor of thymidine nucleotides and it decreases the intracellular concentration of dUTP so that uracil cannot be incorporated into DNA. This chain is Deoxyuridine 5'-triphosphate nucleotidohydrolase, found in Mannheimia succiniciproducens (strain KCTC 0769BP / MBEL55E).